A 171-amino-acid polypeptide reads, in one-letter code: Inosine/xanthosine triphosphatase (171 aa).

8–13 (TTNPAK) contributes to the substrate binding site. Residues Glu-38 and Gln-68 each contribute to the Mg(2+) site.

The protein belongs to the YjjX NTPase family. In terms of assembly, homodimer. The cofactor is Mg(2+). Mn(2+) is required as a cofactor.

It catalyses the reaction XTP + H2O = XDP + phosphate + H(+). It carries out the reaction ITP + H2O = IDP + phosphate + H(+). In terms of biological role, phosphatase that hydrolyzes non-canonical purine nucleotides such as XTP and ITP to their respective diphosphate derivatives. Probably excludes non-canonical purines from DNA/RNA precursor pool, thus preventing their incorporation into DNA/RNA and avoiding chromosomal lesions. The polypeptide is Inosine/xanthosine triphosphatase (Citrobacter koseri (strain ATCC BAA-895 / CDC 4225-83 / SGSC4696)).